Consider the following 271-residue polypeptide: Sulfur carrier protein adenylyltransferase (271 aa).

Residues arginine 13, glycine 40, glutamate 61, arginine 72, lysine 85, leucine 109, and aspartate 129–threonine 133 contribute to the ATP site. Positions 175 and 178 each coordinate Zn(2+). Residue cysteine 192 forms a Glycyl cysteine thioester (Cys-Gly) (interchain with G-Cter in TtuB) linkage. 2 residues coordinate Zn(2+): cysteine 249 and cysteine 252.

The protein belongs to the HesA/MoeB/ThiF family. The cofactor is Zn(2+). Post-translationally, conjugated to TtuB via a covalent linkage that likely involves a lysine residue. Is able to form a covalent thioester adduct with TtuB via Cys-192 in vitro.

It carries out the reaction [molybdopterin-synthase sulfur-carrier protein]-C-terminal Gly-Gly + ATP + H(+) = [molybdopterin-synthase sulfur-carrier protein]-C-terminal Gly-Gly-AMP + diphosphate. It catalyses the reaction [ThiS sulfur-carrier protein]-C-terminal Gly-Gly + ATP + H(+) = [ThiS sulfur-carrier protein]-C-terminal Gly-Gly-AMP + diphosphate. The catalysed reaction is [TtuB sulfur-carrier protein]-C-terminal Gly-Gly + ATP + H(+) = [TtuB sulfur-carrier protein]-C-terminal Gly-Gly-AMP + diphosphate. The protein operates within tRNA modification. It participates in cofactor biosynthesis; thiamine diphosphate biosynthesis. It functions in the pathway cofactor biosynthesis; molybdopterin biosynthesis. With respect to regulation, enzymatic activity may be regulated by TtuB conjugation. In terms of biological role, adenylyltransferase involved in the biosynthesis of several sulfur compounds. Is required for the 2-thiolation of 5-methyluridine residue at position 54 in the T loop of tRNAs, leading to 5-methyl-2-thiouridine (m(5)s(2)U or s(2)T). This modification allows thermal stabilization of tRNAs in thermophilic microorganisms, and is essential for cell growth at high temperatures. TtuC catalyzes the adenylation by ATP of the carboxyl group of the C-terminal glycine of sulfur carrier protein TtuB. Is also involved in the biosynthesis of thiamine, molybdenum cofactor (Moco) and probably tungsten cofactor (Wco), by adenylating the sulfur carriers ThiS and MoaD. Is required for the conjugation of TtuB to target proteins. The chain is Sulfur carrier protein adenylyltransferase from Thermus thermophilus (strain ATCC BAA-163 / DSM 7039 / HB27).